The following is a 278-amino-acid chain: Shikimate dehydrogenase (NADP(+)) (278 aa).

Residues 19–21 (SLS) and T66 each bind shikimate. K70 serves as the catalytic Proton acceptor. Residue D82 participates in NADP(+) binding. Positions 91 and 107 each coordinate shikimate. NADP(+) is bound by residues 133 to 137 (GSGGA), 157 to 162 (NRTRAR), and I222. Y224 serves as a coordination point for shikimate. Position 245 (G245) interacts with NADP(+).

Belongs to the shikimate dehydrogenase family. In terms of assembly, homodimer.

It catalyses the reaction shikimate + NADP(+) = 3-dehydroshikimate + NADPH + H(+). It functions in the pathway metabolic intermediate biosynthesis; chorismate biosynthesis; chorismate from D-erythrose 4-phosphate and phosphoenolpyruvate: step 4/7. Involved in the biosynthesis of the chorismate, which leads to the biosynthesis of aromatic amino acids. Catalyzes the reversible NADPH linked reduction of 3-dehydroshikimate (DHSA) to yield shikimate (SA). The protein is Shikimate dehydrogenase (NADP(+)) of Jannaschia sp. (strain CCS1).